Reading from the N-terminus, the 238-residue chain is Probable 2-phosphosulfolactate phosphatase (238 aa).

Belongs to the ComB family. The cofactor is Mg(2+).

It carries out the reaction (2R)-O-phospho-3-sulfolactate + H2O = (2R)-3-sulfolactate + phosphate. This is Probable 2-phosphosulfolactate phosphatase from Clostridium botulinum (strain Eklund 17B / Type B).